Reading from the N-terminus, the 311-residue chain is Phosphoglycerate mutase 2 (311 aa).

Residues 16–23 (RHGQSELN), 29–30 (CG), Arg-73, 126–129 (ERHY), Lys-137, 153–154 (RR), and 243–244 (GS) contribute to the substrate site. His-17 functions as the Tele-phosphohistidine intermediate in the catalytic mechanism. The active-site Proton donor/acceptor is the Glu-126.

The protein belongs to the phosphoglycerate mutase family. BPG-dependent PGAM subfamily.

It is found in the cytoplasm. It carries out the reaction (2R)-2-phosphoglycerate = (2R)-3-phosphoglycerate. It participates in carbohydrate degradation; glycolysis; pyruvate from D-glyceraldehyde 3-phosphate: step 3/5. Functionally, could be non-functional. The chain is Phosphoglycerate mutase 2 (GPM2) from Saccharomyces cerevisiae (strain ATCC 204508 / S288c) (Baker's yeast).